Consider the following 184-residue polypeptide: Photosystem I assembly protein Ycf4 (184 aa).

2 consecutive transmembrane segments (helical) span residues 22–42 and 57–77; these read FCWA…GTSS and IIFF…LFIS.

This sequence belongs to the Ycf4 family.

The protein resides in the plastid. The protein localises to the chloroplast thylakoid membrane. Its function is as follows. Seems to be required for the assembly of the photosystem I complex. This Platanus occidentalis (Sycamore) protein is Photosystem I assembly protein Ycf4.